The sequence spans 133 residues: Holo-[acyl-carrier-protein] synthase (133 aa).

D8 and E64 together coordinate Mg(2+).

Belongs to the P-Pant transferase superfamily. AcpS family. Mg(2+) serves as cofactor.

The protein resides in the cytoplasm. It catalyses the reaction apo-[ACP] + CoA = holo-[ACP] + adenosine 3',5'-bisphosphate + H(+). Functionally, transfers the 4'-phosphopantetheine moiety from coenzyme A to a Ser of acyl-carrier-protein. This is Holo-[acyl-carrier-protein] synthase from Shewanella loihica (strain ATCC BAA-1088 / PV-4).